We begin with the raw amino-acid sequence, 386 residues long: Pepsin A (386 aa).

A signal peptide spans M1–C15. Residues A16–V60 constitute a propeptide, activation peptide. The Peptidase A1 domain maps to Y74–A383. The active site involves D92. 2 cysteine pairs are disulfide-bonded: C105/C110 and C266/C270. D275 is an active-site residue. A disulfide bond links C309 and C342.

The protein belongs to the peptidase A1 family.

It localises to the secreted. It catalyses the reaction Preferential cleavage: hydrophobic, preferably aromatic, residues in P1 and P1' positions. Cleaves 1-Phe-|-Val-2, 4-Gln-|-His-5, 13-Glu-|-Ala-14, 14-Ala-|-Leu-15, 15-Leu-|-Tyr-16, 16-Tyr-|-Leu-17, 23-Gly-|-Phe-24, 24-Phe-|-Phe-25 and 25-Phe-|-Tyr-26 bonds in the B chain of insulin.. Its function is as follows. Shows particularly broad specificity; although bonds involving phenylalanine and leucine are preferred, many others are also cleaved to some extent. The protein is Pepsin A (PGA) of Canis lupus familiaris (Dog).